The primary structure comprises 539 residues: uncharacterized protein (539 aa).

Ser-216 functions as the Acyl-ester intermediate in the catalytic mechanism.

The protein belongs to the type-B carboxylesterase/lipase family.

It localises to the cytoplasm. The protein localises to the nucleus. This is an uncharacterized protein from Schizosaccharomyces pombe (strain 972 / ATCC 24843) (Fission yeast).